The sequence spans 160 residues: Ureidoglycolate lyase (160 aa).

Belongs to the ureidoglycolate lyase family. As to quaternary structure, homodimer. The cofactor is Ni(2+).

It carries out the reaction (S)-ureidoglycolate = urea + glyoxylate. It participates in nitrogen metabolism; (S)-allantoin degradation. Catalyzes the catabolism of the allantoin degradation intermediate (S)-ureidoglycolate, generating urea and glyoxylate. Involved in the anaerobic utilization of allantoin as sole nitrogen source. Reinforces the induction of genes involved in the degradation of allantoin and glyoxylate by producing glyoxylate. The chain is Ureidoglycolate lyase from Escherichia coli O139:H28 (strain E24377A / ETEC).